The following is a 380-amino-acid chain: Gibberellin 20 oxidase 3 (380 aa).

A Fe2OG dioxygenase domain is found at 221–321; the sequence is DSDSIFRLNY…RKTFAFFLCP (101 aa). Positions 246, 248, and 302 each coordinate Fe cation. Arg312 is an active-site residue.

This sequence belongs to the iron/ascorbate-dependent oxidoreductase family. GA20OX subfamily. Requires Fe(2+) as cofactor. The cofactor is L-ascorbate. Expressed at high level in developing siliques. Detected in seeds, roots, leaves and inflorescences. In seeds, specifically detected at the outer layer of the outer integument.

The catalysed reaction is gibberellin A12 + 2 2-oxoglutarate + 3 O2 + H(+) = gibberellin A9 + 2 succinate + 3 CO2 + 2 H2O. The enzyme catalyses gibberellin A12 + 3 2-oxoglutarate + 3 O2 = gibberellin A25 + 3 succinate + 3 CO2 + H2O + H(+). It carries out the reaction gibberellin A53 + 2 2-oxoglutarate + 3 O2 + H(+) = gibberellin A20 + 2 succinate + 3 CO2 + 2 H2O. It participates in plant hormone biosynthesis; gibberellin biosynthesis. Functionally, key oxidase enzyme in the biosynthesis of gibberellin that catalyzes the conversion of GA12 and GA53 to GA9 and GA20 respectively, via a three-step oxidation at C-20 of the GA skeleton, and GA25 is also formed as a minor product. GA53 is less effectively oxidized than GA12. The polypeptide is Gibberellin 20 oxidase 3 (GA20OX3) (Arabidopsis thaliana (Mouse-ear cress)).